The chain runs to 1982 residues: MASEEENDDNFQEEEEAQEDNAPAAELSNDSDAPLKPNNDEDDDYDPEDSRRKKKGKKRKTRKGEEKGRKKKKRKKNESEEDSDFVQHDEEVEYPSTSKRGRKRKEEKQAAKEKESASSGMPSVEDVCSAFSVCNVEIEYSEEELQSLTTYKAFMHHVRPILQKENPKIAAPKLVMLVAAKWREFCESNPHIQQEGGAAGSGGSAGQARSVTGDEPEEPRSSRSSRNEKPDDIYEEAVEEEEEEEEEEKKPRRKRSGRGKKGRRPSGKVPTLKIKLLGKRKRDSSDEEQDASGASERDSDLEFERMLQKSDDSADEKEAPVSSKADNSAPAAQDDGSGAPVVRKKAKTKIGNKFKKKNKLKKTKNFPEGEDGEHEHQDYCEVCQQGGEIILCDTCPRAYHLVCLEPELDEPPEGKWSCPHCEADGGAAEEEDDDEHQEFCRVCKDGGELLCCDSCPSAYHTFCLNPPLDTIPDGDWRCPRCSCPPLTGKAEKIITWRWAQRSNDDGPSTSKGSKNSNSRVREYFIKWHNMSYWHCEWVPEVQLDVHHPLMIRSFQRKYDMEEPPKFEESLDEADTRYKRIQRHKDKVGMKANDDAEVLEERFYKNGVKPEWLIVQRVINHRTARDGSTMYLVKWRELPYDKSTWEEEGDDIQGLRQAIDYYQDLRAVCTSETTQSRSKKSKKGRKSKLKVEDDEDRPVKHYTPPPEKPTTDLKKKYEDQPAFLEGTGMQLHPYQIEGINWLRYSWGQGIDTILADEMGLGKTIQTVTFLYSLYKEGHCRGPFLVAVPLSTLVNWEREFELWAPDFYCITYIGDKDSRAVIRENELSFEEGAIRGSKVSRLRTTQYKFNVLLTSYELISMDAACLGSIDWAVLVVDEAHRLKSNQSKFFRILNSYTIAYKLLLTGTPLQNNLEELFHLLNFLSRDKFNDLQAFQGEFADVSKEEQVKRLHEMLGPHMLRRLKTDVLKNMPSKSEFIVRVELSAMQKKFYKFILTKNYEALNSKSGGGSCSLINIMMDLKKCCNHPYLFPSAAEEATTAAGGLYEINSLTKAAGKLVLLSKMLKQLKAQNHRVLIFSQMTKMLDILEDFLEGEQYKYERIDGGITGTLRQEAIDRFNAPGAQQFVFLLSTRAGGLGINLATADTVIIYDSDWNPHNDIQAFSRAHRIGQANKVMIYRFVTRNSVEERVTQVAKRKMMLTHLVVRPGMGGKGANFTKQELDDILRFGTEDLFKEDDKEEAIHYDDKAVAELLDRTNRGIEEKESWANEYLSSFKVASYATKEEEEEEETEIIKQDAENSDPAYWVKLLRHHYEQHQEDVGRSLGKGKRVRKQVNYTDGGVVAADTTRDDSNWQDNGSEYNSEYSAGSDEDGGDDDFDDQNGAERKAKRRLERRDDRPLPPLLARVGGNIEVLGFNARQRKSFLNAIMRYGMPPQDAFNSQWLVRDLRGKSERNFKAYVSLFMRHLCEPGADNAETFADGVPREGLSRQHVLTRIGVMSLIRKKVQEFEHINGYYSMPELILKPCEPVRSALKQDVAALEAPPTGGNVDKSATTSNSVTPATSAAPSPAPASEKGEDKDKDSEKEKDKTSAEKSEVKQEQEAEEDKKPGDVKQENPVEEAAGDTKPSDAEVKTEVAKTEPKEETKDPEVKEEPKTEEKEKEKVDDKKPIPPTTVIDDDDDDVMIVKEDGELEKPSASSPKDQKAVAAATSAATGATGKGAEDSLEVLKRKFMFNIADGGFTELHTLWLNEEKAAVPGREYEIWHRRHDYWLLAGIVTHGYGRWQDIQNDIRFAIINEPFKMDVGKGNFLEIKNKFLARRFKLLEQALVIEEQLRRAAYLNLAQDPSHPAMSLNARFAEVECLAESHQHLSKESLAGNKPANAVLHKVLNQLEELLSDMKSDVSRLPATLARIPPVAQRLQMSERSILSRLAATAGNASNAAQLMAQFPAGFQGTTLPAFTSGPAGNFANFRPQFSVPGQLSNNSGV.

Acidic residues predominate over residues 1-19 (MASEEENDDNFQEEEEAQE). 3 disordered regions span residues 1 to 125 (MASE…PSVE), 192 to 348 (IQQE…KAKT), and 354 to 373 (FKKK…EDGE). A compositionally biased stretch (basic residues) spans 52 to 62 (RKKKGKKRKTR). Residues Ser79 and Ser83 each carry the phosphoserine modification. Basic and acidic residues predominate over residues 104–116 (RKEEKQAAKEKES). Ser201, Ser204, Ser210, and Ser221 each carry phosphoserine. Over residues 218–232 (EPRSSRSSRNEKPDD) the composition is skewed to basic and acidic residues. The span at 233-247 (IYEEAVEEEEEEEEE) shows a compositional bias: acidic residues. Residues 251 to 266 (PRRKRSGRGKKGRRPS) are compositionally biased toward basic residues. Residues Ser284, Ser285, Ser292, Ser295, Ser299, Ser310, and Ser313 each carry the phosphoserine modification. The segment covering 295 to 319 (SERDSDLEFERMLQKSDDSADEKEA) has biased composition (basic and acidic residues). Residues 354 to 364 (FKKKNKLKKTK) show a composition bias toward basic residues. 2 consecutive PHD-type zinc fingers follow at residues 377 to 424 (QDYC…CEAD) and 437 to 484 (QEFC…CSCP). 2 consecutive Chromo domains span residues 488–566 (GKAE…PPKF) and 612–673 (LIVQ…SETT). The segment at 671–712 (ETTQSRSKKSKKGRKSKLKVEDDEDRPVKHYTPPPEKPTTDL) is disordered. Residues 676–687 (RSKKSKKGRKSK) show a composition bias toward basic residues. Tyr701 is modified (phosphotyrosine). Thr702 is subject to Phosphothreonine. The Helicase ATP-binding domain occupies 742-924 (RYSWGQGIDT…FHLLNFLSRD (183 aa)). 755 to 762 (DEMGLGKT) is an ATP binding site. The DEAH box motif lies at 875–878 (DEAH). The Helicase C-terminal domain occupies 1056 to 1218 (LLSKMLKQLK…GANFTKQELD (163 aa)). Disordered stretches follow at residues 1331–1396 (NYTD…RPLP) and 1536–1715 (EAPP…TGKG). Residues 1349 to 1361 (WQDNGSEYNSEYS) show a composition bias toward polar residues. A compositionally biased stretch (acidic residues) spans 1364–1377 (SDEDGGDDDFDDQN). Residues 1547 to 1568 (SATTSNSVTPATSAAPSPAPAS) are compositionally biased toward low complexity. Basic and acidic residues-rich tracts occupy residues 1569 to 1611 (EKGE…KQEN), 1621 to 1664 (KPSD…DKKP), and 1679 to 1689 (MIVKEDGELEK). Phosphoserine occurs at positions 1691 and 1694. Over residues 1700 to 1711 (AVAAATSAATGA) the composition is skewed to low complexity.

Belongs to the SNF2/RAD54 helicase family. As to quaternary structure, interacts with the NuRD complex member HDAC1/Rpd3.

It is found in the nucleus. The protein resides in the chromosome. It carries out the reaction ATP + H2O = ADP + phosphate + H(+). With respect to regulation, ATPase activity is stimulated by binding to either DNA or nucleosomes. In terms of biological role, ATP-dependent chromatin-remodeling factor which acts in nucleosome-remodeling by catalyzing ATP-dependent nucleosome mobilization. Involved in regulating transcription. Plays a vital role in development. Binds to a portion of Hunchback (HB) protein that is critical for repression of bithorax complex (BXC) genes. May also function in polycomb group (PcG) repression of Hox genes. May also act as part of the nucleosome remodeling and deacetylase complex (the NuRD complex) which participates in the remodeling of chromatin by deacetylating histones. The polypeptide is Chromodomain-helicase-DNA-binding protein Mi-2 homolog (Mi-2) (Drosophila melanogaster (Fruit fly)).